The primary structure comprises 126 residues: METMGRHVISELWGCDFDKLNDMDFIEKTFVNAALKSGAEVREVAFHKFAPQGVSGVVIISESHLTIHSFPEHGYASIDVYTCGDLDPNVAADYIADALHADTRENIEIPRGMGPVQIKQAQAKVL.

Ser-63 acts as the Schiff-base intermediate with substrate; via pyruvic acid in catalysis. Pyruvic acid (Ser); by autocatalysis is present on Ser-63. The active-site Proton acceptor; for processing activity is His-68. The active-site Proton donor; for catalytic activity is the Cys-83.

It belongs to the prokaryotic AdoMetDC family. Type 1 subfamily. In terms of assembly, heterotetramer of two alpha and two beta chains arranged as a dimer of alpha/beta heterodimers. It depends on pyruvate as a cofactor. Is synthesized initially as an inactive proenzyme. Formation of the active enzyme involves a self-maturation process in which the active site pyruvoyl group is generated from an internal serine residue via an autocatalytic post-translational modification. Two non-identical subunits are generated from the proenzyme in this reaction, and the pyruvate is formed at the N-terminus of the alpha chain, which is derived from the carboxyl end of the proenzyme. The post-translation cleavage follows an unusual pathway, termed non-hydrolytic serinolysis, in which the side chain hydroxyl group of the serine supplies its oxygen atom to form the C-terminus of the beta chain, while the remainder of the serine residue undergoes an oxidative deamination to produce ammonia and the pyruvoyl group blocking the N-terminus of the alpha chain.

The enzyme catalyses S-adenosyl-L-methionine + H(+) = S-adenosyl 3-(methylsulfanyl)propylamine + CO2. It participates in amine and polyamine biosynthesis; S-adenosylmethioninamine biosynthesis; S-adenosylmethioninamine from S-adenosyl-L-methionine: step 1/1. Its function is as follows. Catalyzes the decarboxylation of S-adenosylmethionine to S-adenosylmethioninamine (dcAdoMet), the propylamine donor required for the synthesis of the polyamines spermine and spermidine from the diamine putrescine. The chain is S-adenosylmethionine decarboxylase proenzyme from Bacillus velezensis (strain DSM 23117 / BGSC 10A6 / LMG 26770 / FZB42) (Bacillus amyloliquefaciens subsp. plantarum).